The chain runs to 509 residues: MNEQQRLASRQANSSTKKEEKDYSKYFESVYQPPSLKLAKKRGKEEVKIERDFGLPEEFRDFGAGRKFYIRTYGCQMNEHDTEVMAGIFTTLGYEPTFSTEEADVILLNTCAIRENAENKVFGELGHLKSLKRRNPDLIIGVCGCMSQEESVVNKIMQKNQHVDMVFGTHNIHRLPYILKDAMFSKETVVEVWSKEGDVIENLPKVRRGDIKAWVNIMYGCDKFCTYCIVPYTRGKERSRRPEDIIKEIRHLAANGYKEITLLGQNVNAYGKDFEDIQYGLGDLMDELRKIDIARIRFTTSHPRDFDDHLIDVLGKGGNLVEHIHLPVQSGSTDMLKIMARKYSREHYLELVRKIKETIPNAVLTTDIIVGFPNETDEQFEETMSLYREVGFDTAFTFIYSPREGTPAAKMQDNVPMEVKKERLQRLNTLVNEYGVNKNKRYIGQIVEVLVEGESKNNPEVLAGYTRTNKLVNFVASKSLIGQLVKVKITEAKTWSLNGELVKEPIEVK.

Residues 1 to 15 (MNEQQRLASRQANSS) are compositionally biased toward polar residues. The interval 1 to 25 (MNEQQRLASRQANSSTKKEEKDYSK) is disordered. A compositionally biased stretch (basic and acidic residues) spans 16 to 25 (TKKEEKDYSK). In terms of domain architecture, MTTase N-terminal spans 66 to 184 (RKFYIRTYGC…LPYILKDAMF (119 aa)). [4Fe-4S] cluster is bound by residues C75, C111, C145, C221, C225, and C228. One can recognise a Radical SAM core domain in the interval 207–437 (RRGDIKAWVN…NTLVNEYGVN (231 aa)). Positions 440-503 (KRYIGQIVEV…TWSLNGELVK (64 aa)) constitute a TRAM domain.

This sequence belongs to the methylthiotransferase family. MiaB subfamily. As to quaternary structure, monomer. Requires [4Fe-4S] cluster as cofactor.

The protein resides in the cytoplasm. It carries out the reaction N(6)-dimethylallyladenosine(37) in tRNA + (sulfur carrier)-SH + AH2 + 2 S-adenosyl-L-methionine = 2-methylsulfanyl-N(6)-dimethylallyladenosine(37) in tRNA + (sulfur carrier)-H + 5'-deoxyadenosine + L-methionine + A + S-adenosyl-L-homocysteine + 2 H(+). Its function is as follows. Catalyzes the methylthiolation of N6-(dimethylallyl)adenosine (i(6)A), leading to the formation of 2-methylthio-N6-(dimethylallyl)adenosine (ms(2)i(6)A) at position 37 in tRNAs that read codons beginning with uridine. This Bacillus mycoides (strain KBAB4) (Bacillus weihenstephanensis) protein is tRNA-2-methylthio-N(6)-dimethylallyladenosine synthase.